Consider the following 129-residue polypeptide: Ribosome-binding factor A (129 aa).

Belongs to the RbfA family. In terms of assembly, monomer. Binds 30S ribosomal subunits, but not 50S ribosomal subunits or 70S ribosomes.

It is found in the cytoplasm. One of several proteins that assist in the late maturation steps of the functional core of the 30S ribosomal subunit. Associates with free 30S ribosomal subunits (but not with 30S subunits that are part of 70S ribosomes or polysomes). Required for efficient processing of 16S rRNA. May interact with the 5'-terminal helix region of 16S rRNA. The polypeptide is Ribosome-binding factor A (Stutzerimonas stutzeri (strain A1501) (Pseudomonas stutzeri)).